Here is a 184-residue protein sequence, read N- to C-terminus: Holliday junction branch migration complex subunit RuvA (184 aa).

The domain I stretch occupies residues 1–64 (MIKAIEGIIT…EDANLLYGFI (64 aa)). Positions 65-137 (KESEQRIFEM…LSDAKFGEIN (73 aa)) are domain II. A region of interest (flexible linker) is located at residue Asn-137. Residues 138 to 184 (SMPSYQNEAFMALESLGFKRDRISKVLNECSSNDTASLIKEALKKLA) are domain III.

Belongs to the RuvA family. In terms of assembly, homotetramer. Forms an RuvA(8)-RuvB(12)-Holliday junction (HJ) complex. HJ DNA is sandwiched between 2 RuvA tetramers; dsDNA enters through RuvA and exits via RuvB. An RuvB hexamer assembles on each DNA strand where it exits the tetramer. Each RuvB hexamer is contacted by two RuvA subunits (via domain III) on 2 adjacent RuvB subunits; this complex drives branch migration. In the full resolvosome a probable DNA-RuvA(4)-RuvB(12)-RuvC(2) complex forms which resolves the HJ.

It is found in the cytoplasm. Functionally, the RuvA-RuvB-RuvC complex processes Holliday junction (HJ) DNA during genetic recombination and DNA repair, while the RuvA-RuvB complex plays an important role in the rescue of blocked DNA replication forks via replication fork reversal (RFR). RuvA specifically binds to HJ cruciform DNA, conferring on it an open structure. The RuvB hexamer acts as an ATP-dependent pump, pulling dsDNA into and through the RuvAB complex. HJ branch migration allows RuvC to scan DNA until it finds its consensus sequence, where it cleaves and resolves the cruciform DNA. The chain is Holliday junction branch migration complex subunit RuvA from Campylobacter fetus subsp. fetus (strain 82-40).